A 358-amino-acid chain; its full sequence is CRS2-associated factor 2, mitochondrial (358 aa).

Residues 1–28 constitute a mitochondrion transit peptide; it reads MLSIRRSLTLAKEPKDLFLFLCNLRARC. The segment at 35-64 is disordered; sequence DPPFSPLSKPTKPPKEKKKQKTKKQDQSSE. CRM domains are found at residues 141-239 and 261-357; these read ETLT…SRPI and DGLE…ELVT.

As to quaternary structure, part of large ribonucleo-protein complexes that include group IIB introns.

Its subcellular location is the mitochondrion. In terms of biological role, may be involved in the splicing of group IIB introns in mitochondria. This is CRS2-associated factor 2, mitochondrial from Arabidopsis thaliana (Mouse-ear cress).